Here is a 64-residue protein sequence, read N- to C-terminus: Large ribosomal subunit protein bL33 (64 aa).

The protein belongs to the bacterial ribosomal protein bL33 family.

In Nostoc punctiforme (strain ATCC 29133 / PCC 73102), this protein is Large ribosomal subunit protein bL33.